We begin with the raw amino-acid sequence, 395 residues long: uncharacterized protein (395 aa).

A run of 12 helical transmembrane segments spans residues Leu12 to Leu34, Leu44 to Leu66, Tyr75 to Asn94, Val99 to Phe121, Phe134 to Val156, Ile160 to Val182, Leu208 to Ser230, Val245 to Val264, Ala271 to Phe293, Leu298 to Tyr320, Leu341 to Leu360, and Ser364 to Leu381.

Belongs to the major facilitator superfamily.

Its subcellular location is the cell inner membrane. Functionally, a transporter able to export peptides. When overexpressed, allows cells deleted for multiple peptidases (pepA, pepB, pepD and pepN) to grow in the presence of dipeptides Ala-Gln or Gly-Tyr which otherwise inhibit growth. Cells overexpressing this protein have decreased intracellular levels of Ala-Gln dipeptide, and in a system that produces the Ala-Gln dipeptide overproduction of this protein increases export of the dipeptide. This is an uncharacterized protein from Escherichia coli (strain K12).